The chain runs to 78 residues: Probable Fe(2+)-trafficking protein (78 aa).

Belongs to the Fe(2+)-trafficking protein family. As to quaternary structure, monomer.

Functionally, could be a mediator in iron transactions between iron acquisition and iron-requiring processes, such as synthesis and/or repair of Fe-S clusters in biosynthetic enzymes. The sequence is that of Probable Fe(2+)-trafficking protein from Buchnera aphidicola subsp. Schizaphis graminum (strain Sg).